Here is a 1254-residue protein sequence, read N- to C-terminus: Ubiquitin carboxyl-terminal hydrolase 12 (1254 aa).

S84 carries the phosphoserine modification. The region spanning 97–199 (NVLEQQRDVV…GSYPVVTNLV (103 aa)) is the DUSP domain. In terms of domain architecture, USP spans 364–1110 (TGLVNLGNTC…SAYLLFYIRR (747 aa)). The active-site Nucleophile is the C373. The segment at 827–893 (DEGDTEGSEA…EPELTDKPEA (67 aa)) is disordered. The span at 854–864 (TVTNNENVNNT) shows a compositional bias: low complexity. The span at 867–883 (RDEDMELTDDVEEDAST) shows a compositional bias: acidic residues. The active-site Proton acceptor is H1068. Position 1160 is a phosphoserine (S1160). The segment at 1188–1207 (QDCNDEDDNDDGERTNSGRR) is disordered. Acidic residues predominate over residues 1189 to 1198 (DCNDEDDNDD).

Belongs to the peptidase C19 family. Interacts with FZO1.

The enzyme catalyses Thiol-dependent hydrolysis of ester, thioester, amide, peptide and isopeptide bonds formed by the C-terminal Gly of ubiquitin (a 76-residue protein attached to proteins as an intracellular targeting signal).. Ubiquitin carboxyl-terminal hydrolase that recognizes ubiquitin chains that stabilize FZO1 and promote mitochondrial fusion. UBP12 deubiquitylates FZO1 only after oligomerization. The chain is Ubiquitin carboxyl-terminal hydrolase 12 (UBP12) from Saccharomyces cerevisiae (strain ATCC 204508 / S288c) (Baker's yeast).